A 222-amino-acid chain; its full sequence is Protein-L-isoaspartate O-methyltransferase (222 aa).

Serine 69 is a catalytic residue.

The protein belongs to the methyltransferase superfamily. L-isoaspartyl/D-aspartyl protein methyltransferase family.

It is found in the cytoplasm. The catalysed reaction is [protein]-L-isoaspartate + S-adenosyl-L-methionine = [protein]-L-isoaspartate alpha-methyl ester + S-adenosyl-L-homocysteine. Functionally, catalyzes the methyl esterification of L-isoaspartyl residues in peptides and proteins that result from spontaneous decomposition of normal L-aspartyl and L-asparaginyl residues. It plays a role in the repair and/or degradation of damaged proteins. This is Protein-L-isoaspartate O-methyltransferase from Caulobacter vibrioides (strain NA1000 / CB15N) (Caulobacter crescentus).